The sequence spans 509 residues: Anaerobic nitric oxide reductase flavorubredoxin (509 aa).

The segment at 30–210 (LQGSSYNSYL…PFSRLVTAKI (181 aa)) is zinc metallo-hydrolase. Residues His-79, Glu-81, Asp-83, His-147, Asp-166, and His-227 each coordinate Fe cation. The region spanning 254–393 (ITLFYDTMSN…VCREHGREIA (140 aa)) is the Flavodoxin-like domain. FMN contacts are provided by residues 260 to 264 (TMSNN) and 342 to 369 (AFGS…ETTL). Positions 457–508 (SGCMQCSVCQWIYDPALGEPMQDVTPGTMWSDVPDSFLCPECGLGKDVFNPI) constitute a Rubredoxin-like domain. Fe cation is bound by residues Cys-462, Cys-465, Cys-495, and Cys-498.

It in the N-terminal section; belongs to the zinc metallo-hydrolase group 3 family. As to quaternary structure, homotetramer. Requires Fe cation as cofactor. FMN serves as cofactor.

It is found in the cytoplasm. It functions in the pathway nitrogen metabolism; nitric oxide reduction. Anaerobic nitric oxide reductase; uses NADH to detoxify nitric oxide (NO), protecting several 4Fe-4S NO-sensitive enzymes. Has at least 2 reductase partners, only one of which (NorW, flavorubredoxin reductase) has been identified. NO probably binds to the di-iron center; electrons enter from the NorW at rubredoxin and are transferred sequentially to the FMN center and the di-iron center. Also able to function as an aerobic oxygen reductase. This Pectobacterium atrosepticum (strain SCRI 1043 / ATCC BAA-672) (Erwinia carotovora subsp. atroseptica) protein is Anaerobic nitric oxide reductase flavorubredoxin.